The primary structure comprises 119 residues: UPF0102 protein Pmen_0910 (119 aa).

It belongs to the UPF0102 family.

This Ectopseudomonas mendocina (strain ymp) (Pseudomonas mendocina) protein is UPF0102 protein Pmen_0910.